Reading from the N-terminus, the 278-residue chain is Short-chain dehydrogenase/reductase eupG (278 aa).

3 residues coordinate NADP(+): Leu-19, Asp-71, and Asn-98. The Proton donor role is filled by Ser-155. 3 residues coordinate NADP(+): Tyr-188, Lys-192, and Thr-223. The Proton acceptor role is filled by Tyr-188. Catalysis depends on Lys-192, which acts as the Lowers pKa of active site Tyr.

This sequence belongs to the short-chain dehydrogenases/reductases (SDR) family.

It participates in secondary metabolite biosynthesis; terpenoid biosynthesis. Its function is as follows. Short-chain dehydrogenase/reductase; part of the gene cluster that mediates the biosynthesis of eupenifeldin, a bistropolone meroterpenoid that acts as an antitumor agent. The first step of eupenifeldin biosynthesis is the biosynthesis of 3-methylorcinaldehyde performed by the non-reducing polyketide synthase eupA. Oxidative dearomatization of 3-methylorcinaldehyde likely catalyzed by the FAD-dependent monooxygenase eupB is followed by oxidative ring expansion by the 2-oxoglutarate-dependent dioxygenase eupC to provide the first tropolone metabolite, tropolone stipitaldehyde. In parallel, generation of sesquiterpene alpha-humulene from farnesylpyrophosphate (FPP) is catalyzed by the terpene cyclase eupE. The cytochrome P450 monooxygenase eupD then hydroxylates humulene to humulenol. The putative Diels-Alderase eupF probably catalyzes the formation of the tropolone-humulene skeleton by linking humulenol and the polyketide moiety. The short-chain dehydrogenase/reductase eupG and the flavin-dependent monooxygenase eupH are also essential for eupenifeldin biosynthesis and are likely the additional decorating enzymes of the tropolone-humulene skeleton to produce final eupenifeldin or derivatives. The polypeptide is Short-chain dehydrogenase/reductase eupG (Phoma sp).